The following is a 150-amino-acid chain: Cytochrome c oxidase subunit 5A, mitochondrial (150 aa).

Residues 1-41 constitute a mitochondrion transit peptide; it reads MLGAALRRCAVAATTWAGPRGLLHSSRTPGPAAAIQSVRCY. The short motif at 2–17 is the SIFI-degron element; that stretch reads LGAALRRCAVAATTWA. N6-acetyllysine is present on residues lysine 87 and lysine 113. Phosphothreonine is present on threonine 141.

This sequence belongs to the cytochrome c oxidase subunit 5A family. In terms of assembly, component of the cytochrome c oxidase (complex IV, CIV), a multisubunit enzyme composed of 14 subunits. The complex is composed of a catalytic core of 3 subunits MT-CO1, MT-CO2 and MT-CO3, encoded in the mitochondrial DNA, and 11 supernumerary subunits COX4I, COX5A, COX5B, COX6A, COX6B, COX6C, COX7A, COX7B, COX7C, COX8 and NDUFA4, which are encoded in the nuclear genome. The complex exists as a monomer or a dimer and forms supercomplexes (SCs) in the inner mitochondrial membrane with NADH-ubiquinone oxidoreductase (complex I, CI) and ubiquinol-cytochrome c oxidoreductase (cytochrome b-c1 complex, complex III, CIII), resulting in different assemblies (supercomplex SCI(1)III(2)IV(1) and megacomplex MCI(2)III(2)IV(2)). Interacts with AFG1L. Interacts with RAB5IF. Post-translationally, in response to mitochondrial stress, the precursor protein is ubiquitinated by the SIFI complex in the cytoplasm before mitochondrial import, leading to its degradation. Within the SIFI complex, UBR4 initiates ubiquitin chain that are further elongated or branched by KCMF1.

It is found in the mitochondrion inner membrane. It participates in energy metabolism; oxidative phosphorylation. Component of the cytochrome c oxidase, the last enzyme in the mitochondrial electron transport chain which drives oxidative phosphorylation. The respiratory chain contains 3 multisubunit complexes succinate dehydrogenase (complex II, CII), ubiquinol-cytochrome c oxidoreductase (cytochrome b-c1 complex, complex III, CIII) and cytochrome c oxidase (complex IV, CIV), that cooperate to transfer electrons derived from NADH and succinate to molecular oxygen, creating an electrochemical gradient over the inner membrane that drives transmembrane transport and the ATP synthase. Cytochrome c oxidase is the component of the respiratory chain that catalyzes the reduction of oxygen to water. Electrons originating from reduced cytochrome c in the intermembrane space (IMS) are transferred via the dinuclear copper A center (CU(A)) of subunit 2 and heme A of subunit 1 to the active site in subunit 1, a binuclear center (BNC) formed by heme A3 and copper B (CU(B)). The BNC reduces molecular oxygen to 2 water molecules using 4 electrons from cytochrome c in the IMS and 4 protons from the mitochondrial matrix. This chain is Cytochrome c oxidase subunit 5A, mitochondrial (COX5A), found in Colobus guereza (Mantled guereza).